A 97-amino-acid chain; its full sequence is Large ribosomal subunit protein bL28 (97 aa).

The protein belongs to the bacterial ribosomal protein bL28 family.

This Rhizorhabdus wittichii (strain DSM 6014 / CCUG 31198 / JCM 15750 / NBRC 105917 / EY 4224 / RW1) (Sphingomonas wittichii) protein is Large ribosomal subunit protein bL28.